We begin with the raw amino-acid sequence, 494 residues long: Probable capsid protein (494 aa).

The short motif at 120–123 (RPKR) is the Nuclear localization signal element. The CCHC-type zinc-finger motif lies at 418 to 435 (CRCWVCNIEGHYANECPN). The segment at 474–494 (LSSSDSELDDTCEESSSEESE) is disordered. Over residues 479-494 (SELDDTCEESSSEESE) the composition is skewed to acidic residues.

This sequence belongs to the caulimoviridae capsid protein family. As to quaternary structure, interacts (via nuclear localization signal) with host importin alpha.

It is found in the virion. It localises to the host nucleus. In terms of biological role, self assembles to form an icosahedral capsid, about 50 nm in diameter, nm, composed of 420 subunits of the viral capsid protein. The capsid encapsulates the genomic dsDNA. Following virus entry into host cell, provides nuclear import of the viral genome. Virus particles do not enter the nucleus, but dock at the nuclear membrane through the interaction with host importins. The sequence is that of Probable capsid protein from Dianthus caryophyllus (Carnation).